The chain runs to 120 residues: Large ribosomal subunit protein bL21 (120 aa).

The protein belongs to the bacterial ribosomal protein bL21 family. In terms of assembly, part of the 50S ribosomal subunit. Contacts protein L20.

Its function is as follows. This protein binds to 23S rRNA in the presence of protein L20. This Roseiflexus sp. (strain RS-1) protein is Large ribosomal subunit protein bL21.